A 501-amino-acid chain; its full sequence is Glutamyl-tRNA(Gln) amidotransferase subunit A (501 aa).

Residues Lys-84 and Ser-159 each act as charge relay system in the active site. The active-site Acyl-ester intermediate is Ser-183.

This sequence belongs to the amidase family. GatA subfamily. In terms of assembly, heterotrimer of A, B and C subunits.

The enzyme catalyses L-glutamyl-tRNA(Gln) + L-glutamine + ATP + H2O = L-glutaminyl-tRNA(Gln) + L-glutamate + ADP + phosphate + H(+). Functionally, allows the formation of correctly charged Gln-tRNA(Gln) through the transamidation of misacylated Glu-tRNA(Gln) in organisms which lack glutaminyl-tRNA synthetase. The reaction takes place in the presence of glutamine and ATP through an activated gamma-phospho-Glu-tRNA(Gln). The polypeptide is Glutamyl-tRNA(Gln) amidotransferase subunit A (Streptomyces avermitilis (strain ATCC 31267 / DSM 46492 / JCM 5070 / NBRC 14893 / NCIMB 12804 / NRRL 8165 / MA-4680)).